We begin with the raw amino-acid sequence, 195 residues long: dCTP deaminase (195 aa).

DCTP-binding positions include 105 to 110 (RSSLGR), Asp123, 131 to 133 (TLE), Gln152, Tyr166, Lys173, and Gln177. Glu133 serves as the catalytic Proton donor/acceptor. A disordered region spans residues 159–195 (KTPADRPYGAERGSKYQGQSGPQASKIQGDREFGGDQ). The segment covering 160 to 172 (TPADRPYGAERGS) has biased composition (basic and acidic residues). Positions 174 to 184 (YQGQSGPQASK) are enriched in polar residues. Residues 186-195 (QGDREFGGDQ) are compositionally biased toward basic and acidic residues.

This sequence belongs to the dCTP deaminase family. As to quaternary structure, homotrimer.

The catalysed reaction is dCTP + H2O + H(+) = dUTP + NH4(+). Its pathway is pyrimidine metabolism; dUMP biosynthesis; dUMP from dCTP (dUTP route): step 1/2. Catalyzes the deamination of dCTP to dUTP. The chain is dCTP deaminase from Haloarcula marismortui (strain ATCC 43049 / DSM 3752 / JCM 8966 / VKM B-1809) (Halobacterium marismortui).